The chain runs to 160 residues: MAEKQRGPNRLAKVSLDEASIARGNPDQEHERAIALFDILEDNSFTIPGREGPYALTLGLVENKLSFAIATVDGEPVMTHLLSLTPFRRVIRDYEMICESYYNAIRTASPSQIEAIDMGRRGLHNEASETLKQRLEGKVDLDHDTARRLFTLIFALHWKG.

It belongs to the UPF0262 family.

In Methylobacterium radiotolerans (strain ATCC 27329 / DSM 1819 / JCM 2831 / NBRC 15690 / NCIMB 10815 / 0-1), this protein is UPF0262 protein Mrad2831_3513.